The primary structure comprises 270 residues: Alpha N-terminal protein methyltransferase 1 (270 aa).

Residues glycine 114, arginine 119, 137–139 (EQN), 165–166 (LQ), and glutamine 180 each bind S-adenosyl-L-methionine.

It belongs to the methyltransferase superfamily. NTM1 family.

It catalyses the reaction N-terminal L-alanyl-L-prolyl-L-lysyl-[protein] + 3 S-adenosyl-L-methionine = N-terminal N,N,N-trimethyl-L-alanyl-L-prolyl-L-lysyl-[protein] + 3 S-adenosyl-L-homocysteine + 3 H(+). The enzyme catalyses N-terminal L-seryl-L-prolyl-L-lysyl-[protein] + 3 S-adenosyl-L-methionine = N-terminal N,N,N-trimethyl-L-seryl-L-prolyl-L-lysyl-[protein] + 3 S-adenosyl-L-homocysteine + 3 H(+). The catalysed reaction is N-terminal L-prolyl-L-prolyl-L-lysyl-[protein] + 2 S-adenosyl-L-methionine = N-terminal N,N-dimethyl-L-prolyl-L-prolyl-L-lysyl-[protein] + 2 S-adenosyl-L-homocysteine + 2 H(+). Functionally, alpha-N-methyltransferase that methylates the N-terminus of target proteins containing the N-terminal motif [Ala/Pro/Ser]-Pro-Lys when the initiator Met is cleaved. Specifically catalyzes mono-, di- or tri-methylation of exposed alpha-amino group of Ala or Ser residue in the [Ala/Ser]-Pro-Lys motif and mono- or di-methylation of Pro in the Pro-Pro-Lys motif. This chain is Alpha N-terminal protein methyltransferase 1, found in Dictyostelium discoideum (Social amoeba).